Reading from the N-terminus, the 974-residue chain is Glycine dehydrogenase (decarboxylating) (974 aa).

Residue Lys-720 is modified to N6-(pyridoxal phosphate)lysine.

Belongs to the GcvP family. In terms of assembly, the glycine cleavage system is composed of four proteins: P, T, L and H. The cofactor is pyridoxal 5'-phosphate.

It catalyses the reaction N(6)-[(R)-lipoyl]-L-lysyl-[glycine-cleavage complex H protein] + glycine + H(+) = N(6)-[(R)-S(8)-aminomethyldihydrolipoyl]-L-lysyl-[glycine-cleavage complex H protein] + CO2. The glycine cleavage system catalyzes the degradation of glycine. The P protein binds the alpha-amino group of glycine through its pyridoxal phosphate cofactor; CO(2) is released and the remaining methylamine moiety is then transferred to the lipoamide cofactor of the H protein. The polypeptide is Glycine dehydrogenase (decarboxylating) (Cupriavidus metallidurans (strain ATCC 43123 / DSM 2839 / NBRC 102507 / CH34) (Ralstonia metallidurans)).